We begin with the raw amino-acid sequence, 215 residues long: Uracil phosphoribosyltransferase (215 aa).

5-phospho-alpha-D-ribose 1-diphosphate contacts are provided by residues R77, R102, and 129-137 (DPMLATGGS). Uracil-binding positions include I193 and 198–200 (GDA). Residue D199 participates in 5-phospho-alpha-D-ribose 1-diphosphate binding.

Belongs to the UPRTase family. Requires Mg(2+) as cofactor.

It catalyses the reaction UMP + diphosphate = 5-phospho-alpha-D-ribose 1-diphosphate + uracil. It functions in the pathway pyrimidine metabolism; UMP biosynthesis via salvage pathway; UMP from uracil: step 1/1. Its activity is regulated as follows. Allosterically activated by GTP. Its function is as follows. Catalyzes the conversion of uracil and 5-phospho-alpha-D-ribose 1-diphosphate (PRPP) to UMP and diphosphate. The chain is Uracil phosphoribosyltransferase from Corynebacterium urealyticum (strain ATCC 43042 / DSM 7109).